Here is a 313-residue protein sequence, read N- to C-terminus: Ribosomal RNA small subunit methyltransferase I (313 aa).

The disordered stretch occupies residues 1 to 23 (MASIQLARTTRGGDGVARADGTR).

Belongs to the methyltransferase superfamily. RsmI family.

It is found in the cytoplasm. The enzyme catalyses cytidine(1402) in 16S rRNA + S-adenosyl-L-methionine = 2'-O-methylcytidine(1402) in 16S rRNA + S-adenosyl-L-homocysteine + H(+). In terms of biological role, catalyzes the 2'-O-methylation of the ribose of cytidine 1402 (C1402) in 16S rRNA. This is Ribosomal RNA small subunit methyltransferase I from Micromonospora olivasterospora.